We begin with the raw amino-acid sequence, 472 residues long: Glutamate--tRNA ligase (472 aa).

The short motif at 9–19 (PSPTGPLHIGS) is the 'HIGH' region element. The 'KMSKS' region motif lies at 237-241 (KLSKR). Lys240 serves as a coordination point for ATP.

Belongs to the class-I aminoacyl-tRNA synthetase family. Glutamate--tRNA ligase type 1 subfamily. As to quaternary structure, monomer.

It is found in the cytoplasm. The catalysed reaction is tRNA(Glu) + L-glutamate + ATP = L-glutamyl-tRNA(Glu) + AMP + diphosphate. Functionally, catalyzes the attachment of glutamate to tRNA(Glu) in a two-step reaction: glutamate is first activated by ATP to form Glu-AMP and then transferred to the acceptor end of tRNA(Glu). The polypeptide is Glutamate--tRNA ligase (Buchnera aphidicola subsp. Baizongia pistaciae (strain Bp)).